Reading from the N-terminus, the 192-residue chain is Imidazoleglycerol-phosphate dehydratase (192 aa).

The protein belongs to the imidazoleglycerol-phosphate dehydratase family.

The protein localises to the cytoplasm. It carries out the reaction D-erythro-1-(imidazol-4-yl)glycerol 3-phosphate = 3-(imidazol-4-yl)-2-oxopropyl phosphate + H2O. It participates in amino-acid biosynthesis; L-histidine biosynthesis; L-histidine from 5-phospho-alpha-D-ribose 1-diphosphate: step 6/9. This is Imidazoleglycerol-phosphate dehydratase from Staphylococcus aureus (strain MRSA252).